Consider the following 74-residue polypeptide: UPF0435 protein Bcer98_0391 (74 aa).

This sequence belongs to the UPF0435 family.

This is UPF0435 protein Bcer98_0391 from Bacillus cytotoxicus (strain DSM 22905 / CIP 110041 / 391-98 / NVH 391-98).